Consider the following 159-residue polypeptide: Endoribonuclease YbeY (159 aa).

Residues H125, H129, and H135 each contribute to the Zn(2+) site.

Belongs to the endoribonuclease YbeY family. The cofactor is Zn(2+).

Its subcellular location is the cytoplasm. Its function is as follows. Single strand-specific metallo-endoribonuclease involved in late-stage 70S ribosome quality control and in maturation of the 3' terminus of the 16S rRNA. This Limosilactobacillus reuteri (strain DSM 20016) (Lactobacillus reuteri) protein is Endoribonuclease YbeY.